The sequence spans 281 residues: Oxidoreductase-like protein SRL4 (281 aa).

5 residues coordinate NADP(+): Leu39, Thr60, Lys67, Lys152, and Lys197. Lys197 functions as the Lowers pKa of active site Tyr in the catalytic mechanism.

The protein belongs to the short-chain dehydrogenases/reductases (SDR) family.

May be involved in the regulation of dNTP production. Induces the SOS system when expressed in E.coli, therefore, it may play a role in DNA metabolism and/or in genome stability. In Saccharomyces cerevisiae (strain ATCC 204508 / S288c) (Baker's yeast), this protein is Oxidoreductase-like protein SRL4 (SRL4).